The sequence spans 340 residues: Sulfotransferase ppzF (340 aa).

Its pathway is secondary metabolite biosynthesis. In terms of biological role, sulfotransferase; part of the gene cluster that mediates the biosynthesis of pyrrolopyrazines, secondary metabolites showing insecticidal activity. The role of ppzF within the pathway has still to be determined. The single multifunctional NRPS ppzA is sufficient to produce peramine via condensation of 1-pyrroline-5-carboxylate and arginine, N-methylation of the alpha-amino group of arginine and reduction of the thioester and the cyclization to form an iminium ion resulting in release from the peptide synthetase. Deprotonation of this intermediate and oxidation of the pyrroline ring would give rise to peramine. In Epichloe species that produce only peramine, the peramine synthetase gene is not localized in a gene cluster, in contrast to Metarhizium species that contain additional pyrrolopyrazine biosynthesis genes. The 2-oxoglutarate-Fe(II) type oxidoreductase ppzC hydroxylates peramine to yield the newly identified compound 8-hydroxyperamine whereas ppzD converts L-proline into trans-4-hydroxy-L-proline, a precursor of peramine biosynthesis. The protein is Sulfotransferase ppzF of Metarhizium rileyi (strain RCEF 4871) (Nomuraea rileyi).